Reading from the N-terminus, the 180-residue chain is MIIYLHGFDSTSPGNHEKVLQLQFIDPDVRFINYSTLHPKHDMQHLLKEVHKAIEQSNDPEPIICGVGLGGYWSERIGFLCGIKQVIFNPNLHPENNMAGRIDRPEEYEDIATKCVEQFRMKNKGRCLVILSRDDEIHDNSKTAQALENYYEVVWDDKETHKFKKISQHLQKMKAFKENN.

It belongs to the UPF0227 family.

The protein is UPF0227 protein VV2369 of Vibrio vulnificus (strain YJ016).